Consider the following 363-residue polypeptide: 1-aminocyclopropane-1-carboxylate oxidase homolog (363 aa).

One can recognise a Fe2OG dioxygenase domain in the interval 212-312 (FHLFCSCNYY…MSITCFFGES (101 aa)). Positions 236, 238, and 292 each coordinate Fe cation.

This sequence belongs to the iron/ascorbate-dependent oxidoreductase family.

The polypeptide is 1-aminocyclopropane-1-carboxylate oxidase homolog (ACO3) (Solanum lycopersicum (Tomato)).